The chain runs to 201 residues: ATP-dependent Clp protease proteolytic subunit 2 (201 aa).

Serine 98 acts as the Nucleophile in catalysis. Histidine 123 is a catalytic residue.

It belongs to the peptidase S14 family. As to quaternary structure, fourteen ClpP subunits assemble into 2 heptameric rings which stack back to back to give a disk-like structure with a central cavity, resembling the structure of eukaryotic proteasomes.

The protein localises to the cytoplasm. The enzyme catalyses Hydrolysis of proteins to small peptides in the presence of ATP and magnesium. alpha-casein is the usual test substrate. In the absence of ATP, only oligopeptides shorter than five residues are hydrolyzed (such as succinyl-Leu-Tyr-|-NHMec, and Leu-Tyr-Leu-|-Tyr-Trp, in which cleavage of the -Tyr-|-Leu- and -Tyr-|-Trp bonds also occurs).. Its function is as follows. Cleaves peptides in various proteins in a process that requires ATP hydrolysis. Has a chymotrypsin-like activity. Plays a major role in the degradation of misfolded proteins. In Pseudomonas aeruginosa (strain ATCC 15692 / DSM 22644 / CIP 104116 / JCM 14847 / LMG 12228 / 1C / PRS 101 / PAO1), this protein is ATP-dependent Clp protease proteolytic subunit 2.